The following is a 572-amino-acid chain: Hemagglutinin-neuraminidase (572 aa).

Residues 1–31 (MEYWKHTNHGKDACNELGTSMATHGNKITNK) are Intravirion-facing. A helical transmembrane segment spans residues 32–52 (ITYILWTIILVLLSIIFIIVL). Residues 53–572 (INSIKSEKAH…FKTEIPKSCS (520 aa)) are Virion surface-facing. Disulfide bonds link C190/C214 and C256/C269. The segment at 252 to 257 (NRKSCS) is involved in neuraminidase activity. N-linked (GlcNAc...) asparagine; by host glycans are attached at residues N308 and N351. 2 cysteine pairs are disulfide-bonded: C355–C469 and C463–C473. N523 carries N-linked (GlcNAc...) asparagine; by host glycosylation. A disulfide bridge connects residues C535 and C544.

The protein belongs to the paramyxoviruses hemagglutinin-neuraminidase family. Homotetramer; composed of disulfide-linked homodimers. Interacts with F protein trimer.

It is found in the virion membrane. Its subcellular location is the host cell membrane. The catalysed reaction is Hydrolysis of alpha-(2-&gt;3)-, alpha-(2-&gt;6)-, alpha-(2-&gt;8)- glycosidic linkages of terminal sialic acid residues in oligosaccharides, glycoproteins, glycolipids, colominic acid and synthetic substrates.. Its function is as follows. Attaches the virus to sialic acid-containing cell receptors and thereby initiating infection. Binding of HN protein to the receptor induces a conformational change that allows the F protein to trigger virion/cell membranes fusion. Functionally, neuraminidase activity ensures the efficient spread of the virus by dissociating the mature virions from the neuraminic acid containing glycoproteins. The sequence is that of Hemagglutinin-neuraminidase (HN) from Homo sapiens (Human).